A 144-amino-acid polypeptide reads, in one-letter code: MCHARAARQATGEAEAAPRDNFSKAAGSKRVVGAAFETRAQRFLERAGLAPVARNVTVRGGEIDLVMRERDGTLVFVEVRARTSGRYGGAAASIGARKRMRLLHAAHLFWARMGGASACRFDVVAFEGGRLVWLRDAFRADETA.

Residues 1–20 (MCHARAARQATGEAEAAPRD) form a disordered region.

This sequence belongs to the UPF0102 family.

The sequence is that of UPF0102 protein BTH_I3148 from Burkholderia thailandensis (strain ATCC 700388 / DSM 13276 / CCUG 48851 / CIP 106301 / E264).